We begin with the raw amino-acid sequence, 645 residues long: 1-deoxy-D-xylulose-5-phosphate synthase 1 (645 aa).

A disordered region spans residues 1-20 (MTDTKTPTLDRVAGPADLRS). Residues H78 and 119 to 121 (AHS) contribute to the thiamine diphosphate site. D150 contacts Mg(2+). Thiamine diphosphate is bound by residues 151–152 (GS), N179, Y291, and E373. Position 179 (N179) interacts with Mg(2+).

The protein belongs to the transketolase family. DXPS subfamily. Homodimer. Requires Mg(2+) as cofactor. Thiamine diphosphate serves as cofactor.

It carries out the reaction D-glyceraldehyde 3-phosphate + pyruvate + H(+) = 1-deoxy-D-xylulose 5-phosphate + CO2. It functions in the pathway metabolic intermediate biosynthesis; 1-deoxy-D-xylulose 5-phosphate biosynthesis; 1-deoxy-D-xylulose 5-phosphate from D-glyceraldehyde 3-phosphate and pyruvate: step 1/1. Functionally, catalyzes the acyloin condensation reaction between C atoms 2 and 3 of pyruvate and glyceraldehyde 3-phosphate to yield 1-deoxy-D-xylulose-5-phosphate (DXP). The polypeptide is 1-deoxy-D-xylulose-5-phosphate synthase 1 (Roseobacter denitrificans (strain ATCC 33942 / OCh 114) (Erythrobacter sp. (strain OCh 114))).